The chain runs to 335 residues: Pyruvate dehydrogenase E1 component subunit beta (335 aa).

Glu60 contacts thiamine diphosphate. 3 residues coordinate K(+): Ala161, Ile162, and Asn166.

In terms of assembly, heterodimer of an alpha and a beta chain. Thiamine diphosphate is required as a cofactor.

Its subcellular location is the plastid. The protein localises to the chloroplast. The enzyme catalyses N(6)-[(R)-lipoyl]-L-lysyl-[protein] + pyruvate + H(+) = N(6)-[(R)-S(8)-acetyldihydrolipoyl]-L-lysyl-[protein] + CO2. Its function is as follows. The pyruvate dehydrogenase complex catalyzes the overall conversion of pyruvate to acetyl-CoA and CO(2). It contains multiple copies of three enzymatic components: pyruvate dehydrogenase (E1), dihydrolipoamide acetyltransferase (E2) and lipoamide dehydrogenase (E3). This Chlorokybus atmophyticus (Soil alga) protein is Pyruvate dehydrogenase E1 component subunit beta (pdhB).